A 366-amino-acid chain; its full sequence is Holliday junction branch migration complex subunit RuvB (366 aa).

The segment at 1-50 (MAIISSKKQPPEPNGEPKQRRESAKAPSTENILKPEAAIDEQEQQEEGIR) is disordered. A large ATPase domain (RuvB-L) region spans residues 13 to 210 (PNGEPKQRRE…FGLIQKLRFY (198 aa)). Positions 15–24 (GEPKQRRESA) are enriched in basic and acidic residues. ATP-binding positions include I49, R50, G91, K94, T95, T96, 157 to 159 (EDY), R200, Y210, and R247. T95 contacts Mg(2+). The interval 211–281 (EVDELTQIVL…IASEALQLFQ (71 aa)) is small ATPAse domain (RuvB-S). Residues 284-366 (PCGLDWTDRQ…TPPNEQLSLL (83 aa)) form a head domain (RuvB-H) region. DNA is bound by residues R339 and R344.

It belongs to the RuvB family. In terms of assembly, homohexamer. Forms an RuvA(8)-RuvB(12)-Holliday junction (HJ) complex. HJ DNA is sandwiched between 2 RuvA tetramers; dsDNA enters through RuvA and exits via RuvB. An RuvB hexamer assembles on each DNA strand where it exits the tetramer. Each RuvB hexamer is contacted by two RuvA subunits (via domain III) on 2 adjacent RuvB subunits; this complex drives branch migration. In the full resolvosome a probable DNA-RuvA(4)-RuvB(12)-RuvC(2) complex forms which resolves the HJ.

The protein localises to the cytoplasm. The enzyme catalyses ATP + H2O = ADP + phosphate + H(+). Functionally, the RuvA-RuvB-RuvC complex processes Holliday junction (HJ) DNA during genetic recombination and DNA repair, while the RuvA-RuvB complex plays an important role in the rescue of blocked DNA replication forks via replication fork reversal (RFR). RuvA specifically binds to HJ cruciform DNA, conferring on it an open structure. The RuvB hexamer acts as an ATP-dependent pump, pulling dsDNA into and through the RuvAB complex. RuvB forms 2 homohexamers on either side of HJ DNA bound by 1 or 2 RuvA tetramers; 4 subunits per hexamer contact DNA at a time. Coordinated motions by a converter formed by DNA-disengaged RuvB subunits stimulates ATP hydrolysis and nucleotide exchange. Immobilization of the converter enables RuvB to convert the ATP-contained energy into a lever motion, pulling 2 nucleotides of DNA out of the RuvA tetramer per ATP hydrolyzed, thus driving DNA branch migration. The RuvB motors rotate together with the DNA substrate, which together with the progressing nucleotide cycle form the mechanistic basis for DNA recombination by continuous HJ branch migration. Branch migration allows RuvC to scan DNA until it finds its consensus sequence, where it cleaves and resolves cruciform DNA. This is Holliday junction branch migration complex subunit RuvB from Nostoc punctiforme (strain ATCC 29133 / PCC 73102).